Here is a 635-residue protein sequence, read N- to C-terminus: MVSIRLPDGSVRQYEHPVTVAEVAASIGPGLAKAALGGKLDGELVDTSTVIDRDASLAIVTDKDADGLDIIRHSTAHLLAYAVKELYPDAQVTIGPVIDNGFYYDFSYNRPFTPEDLEKIEKRMQELAKKDEPVTRRVVSRDEAAGYFRSIGEKYKAEIIESIPQSDEIKLYSHGGFTDLCRGPHVPSTGKLKVFKLMKVAGAYWRGDSKNEQLQRIYGTAWTKKEDQDQYLHMLEEAEKRDHRKLGKQLDLFHMQEESPGMVFWHPKGWALWQQVEQYMRRRVNEAGYLEIKTPMIMDRSLWEASGHWQNYRENMFTTESEKRDYAIKPMNCPGHVQVFKHGLRSYRDLPLRYAEFGSCHRNEASGALHGLMRVRGFVQDDAHIFCTEDQFISESIAFNTLAMSVYKDFGFDHIDIKLSLRPDQRAGTDETWDRAEQGLRDALTACGLTWEELPGEGAFYGPKIEYHIKDALGRSWQCGTLQLDMVLPERLGAEYVAEDNSRRRPVMLHRAIVGSMERFLGILIEHHAGAMPVWLAPYQAIVLNIAESQAEYAQSLAQSLQKQGVRVAADLRNEKISYKIREHTLEKVPYLLVVGDKERDAQTVAVRARGGVDLGVMPVEAFVERLQEDLRSFK.

The 61-residue stretch at 1 to 61 folds into the TGS domain; sequence MVSIRLPDGS…DRDASLAIVT (61 aa). The catalytic stretch occupies residues 242-533; sequence DHRKLGKQLD…LIEHHAGAMP (292 aa). Zn(2+) is bound by residues Cys-333, His-384, and His-510.

This sequence belongs to the class-II aminoacyl-tRNA synthetase family. Homodimer. Zn(2+) serves as cofactor.

It is found in the cytoplasm. The catalysed reaction is tRNA(Thr) + L-threonine + ATP = L-threonyl-tRNA(Thr) + AMP + diphosphate + H(+). Functionally, catalyzes the attachment of threonine to tRNA(Thr) in a two-step reaction: L-threonine is first activated by ATP to form Thr-AMP and then transferred to the acceptor end of tRNA(Thr). Also edits incorrectly charged L-seryl-tRNA(Thr). The chain is Threonine--tRNA ligase from Burkholderia cenocepacia (strain ATCC BAA-245 / DSM 16553 / LMG 16656 / NCTC 13227 / J2315 / CF5610) (Burkholderia cepacia (strain J2315)).